The following is a 286-amino-acid chain: Digeranylgeranylglyceryl phosphate synthase (286 aa).

8 helical membrane-spanning segments follow: residues 21–41 (AVAA…FAVT), 42–62 (TAHV…GNAI), 96–116 (FLFV…IVLA), 133–155 (LPGV…GAAA), 162–181 (FGVV…REII), 214–234 (VLLV…FGIW), 235–255 (YLTL…QAPD), and 266–286 (RGMF…VAGI).

Belongs to the UbiA prenyltransferase family. DGGGP synthase subfamily. The cofactor is Mg(2+).

It localises to the cell membrane. It carries out the reaction sn-3-O-(geranylgeranyl)glycerol 1-phosphate + (2E,6E,10E)-geranylgeranyl diphosphate = 2,3-bis-O-(geranylgeranyl)-sn-glycerol 1-phosphate + diphosphate. The protein operates within membrane lipid metabolism; glycerophospholipid metabolism. Its function is as follows. Prenyltransferase that catalyzes the transfer of the geranylgeranyl moiety of geranylgeranyl diphosphate (GGPP) to the C2 hydroxyl of (S)-3-O-geranylgeranylglyceryl phosphate (GGGP). This reaction is the second ether-bond-formation step in the biosynthesis of archaeal membrane lipids. The polypeptide is Digeranylgeranylglyceryl phosphate synthase (Haloquadratum walsbyi (strain DSM 16790 / HBSQ001)).